The sequence spans 1254 residues: SUN domain-containing ossification factor (1254 aa).

The first 29 residues, 1 to 29 (MKKHRRALALVSCLFLCSLVWLPSWRVCC), serve as a signal peptide directing secretion. 3 disordered regions span residues 58–88 (KKDEREGPINAESLGKSGSNLPISPKEHKLK), 118–270 (EESS…DIPT), and 282–304 (EKEKSQSMHASSNGGSHATKKVQ). Low complexity predominate over residues 130–145 (VENISSSSTSEITPIS). Residues 165-175 (EQSETDCDVGE) are compositionally biased toward acidic residues. N-linked (GlcNAc...) asparagine glycosylation is found at Asn202 and Asn236. Residues 241–253 (LKNESSDYTKPGD) are compositionally biased toward basic and acidic residues. Residues 284 to 453 (EKSQSMHASS…SLIRVFGTSM (170 aa)) enclose the SUN domain. Polar residues predominate over residues 288–297 (SMHASSNGGS). Asn524 is a glycosylation site (N-linked (GlcNAc...) asparagine). Disordered regions lie at residues 530–553 (NATATAAPKMPESTPVSTPVPSPE), 583–605 (EEEEEASPSTVTLLGSGEQEDES), and 759–788 (HIPSPVIPQESSVEIDNETEQKSESFSSIE). Residues 540 to 553 (PESTPVSTPVPSPE) are compositionally biased toward low complexity. Positions 909-1009 (NQKESVFMRL…VAELKREVSD (101 aa)) form a coiled coil. N-linked (GlcNAc...) asparagine glycosylation is found at Asn928 and Asn955. Residues 1011-1031 (QSYLVISLVLCVVLGLMLCMQ) form a helical membrane-spanning segment. Residue Ser1081 is modified to Phosphoserine. The disordered stretch occupies residues 1152–1172 (EVYHSSYKGPPSEGSSETSSQ). Over residues 1163–1172 (SEGSSETSSQ) the composition is skewed to low complexity.

In terms of processing, O-glycosylated. O-mannosylated by POMT1 and POMT2 and elongated by POMGNT1. N-glycosylated. Highly expressed in pancreas and testis and to a lower extent in prostate, ovary, heart, thymus, small intestine and spleen.

The protein resides in the rough endoplasmic reticulum membrane. Functionally, required for bone modeling during late embryogenesis. Regulates type I collagen synthesis in osteoblasts during their postnatal maturation. This Homo sapiens (Human) protein is SUN domain-containing ossification factor (SUCO).